The sequence spans 234 residues: Opacity protein opA56 (234 aa).

Ala-1 is a signal peptide.

This sequence belongs to the opacity porin family.

The protein localises to the cell outer membrane. In terms of biological role, implicated in a number of adherence functions. OPA proteins are implicated in pathogenesis and are subject to phase variation. This chain is Opacity protein opA56 (opaF), found in Neisseria gonorrhoeae.